A 367-amino-acid chain; its full sequence is Phosphoribosylaminoimidazole-succinocarboxamide synthase (367 aa).

It belongs to the SAICAR synthetase family.

It catalyses the reaction 5-amino-1-(5-phospho-D-ribosyl)imidazole-4-carboxylate + L-aspartate + ATP = (2S)-2-[5-amino-1-(5-phospho-beta-D-ribosyl)imidazole-4-carboxamido]succinate + ADP + phosphate + 2 H(+). Its pathway is purine metabolism; IMP biosynthesis via de novo pathway; 5-amino-1-(5-phospho-D-ribosyl)imidazole-4-carboxamide from 5-amino-1-(5-phospho-D-ribosyl)imidazole-4-carboxylate: step 1/2. This chain is Phosphoribosylaminoimidazole-succinocarboxamide synthase, found in Aliivibrio salmonicida (strain LFI1238) (Vibrio salmonicida (strain LFI1238)).